A 62-amino-acid chain; its full sequence is U10-buthitoxin-Hj1a (62 aa).

A signal peptide spans 1–22 (MQKIFIILVLFCILKFNVDVEG). Disulfide bonds link Cys-28–Cys-46, Cys-33–Cys-59, and Cys-37–Cys-61.

The protein belongs to the short scorpion toxin superfamily. Potassium channel inhibitor family. Alpha-KTx 23 subfamily. As to expression, expressed by the venom gland.

The protein localises to the secreted. May block potassium channels. In Hottentotta judaicus (Black scorpion), this protein is U10-buthitoxin-Hj1a.